Consider the following 190-residue polypeptide: GMP synthase [glutamine-hydrolyzing] subunit A (190 aa).

Positions 2–189 (TILVINNKGQ…YEICKKRCNN (188 aa)) constitute a Glutamine amidotransferase type-1 domain. Catalysis depends on Cys76, which acts as the Nucleophile. Active-site residues include His163 and Glu165.

Heterodimer composed of a glutamine amidotransferase subunit (A) and a GMP-binding subunit (B).

It carries out the reaction XMP + L-glutamine + ATP + H2O = GMP + L-glutamate + AMP + diphosphate + 2 H(+). The protein operates within purine metabolism; GMP biosynthesis; GMP from XMP (L-Gln route): step 1/1. Catalyzes the synthesis of GMP from XMP. This Methanobrevibacter smithii (strain ATCC 35061 / DSM 861 / OCM 144 / PS) protein is GMP synthase [glutamine-hydrolyzing] subunit A.